A 124-amino-acid chain; its full sequence is Iron-sulfur cluster insertion protein ErpA (124 aa).

Residues C52, C116, and C118 each coordinate iron-sulfur cluster.

Belongs to the HesB/IscA family. In terms of assembly, homodimer. Iron-sulfur cluster serves as cofactor.

In terms of biological role, required for insertion of 4Fe-4S clusters for at least IspG. The protein is Iron-sulfur cluster insertion protein ErpA of Acidithiobacillus ferrooxidans (strain ATCC 23270 / DSM 14882 / CIP 104768 / NCIMB 8455) (Ferrobacillus ferrooxidans (strain ATCC 23270)).